We begin with the raw amino-acid sequence, 70 residues long: Small, acid-soluble spore protein alpha (70 aa).

It belongs to the alpha/beta-type SASP family.

Its function is as follows. SASP are bound to spore DNA. They are double-stranded DNA-binding proteins that cause DNA to change to an a-like conformation. They protect the DNA backbone from chemical and enzymatic cleavage and are thus involved in dormant spore's high resistance to UV light. The sequence is that of Small, acid-soluble spore protein alpha from Paraclostridium bifermentans (Clostridium bifermentans).